The following is an 87-amino-acid chain: MPYTVRFTTTARRDLHKLPPRILAAVVEFAFGDLSREPLRVGKPLRRELAGTFSARRGTYRLLYRIDDEHTTVVILRVDHRADIYRR.

It belongs to the RelE toxin family. As to quaternary structure, interacts with cognate antitoxin RelF, which neutralizes the toxin. Also interacts with non-cognate antitoxin RelB in vitro, in M.smegmatis this neutralizes the toxicity of this toxin.

Its function is as follows. Toxic component of a type II toxin-antitoxin (TA) system. Has RNase activity and preferentially cleaves at the 3'-end of purine ribonucleotides. Overexpression in M.tuberculosis or M.smegmatis inhibits colony formation in a bacteriostatic rather than bacteriocidal fashion. Its toxic effect is neutralized by coexpression with cognate antitoxin RelB2 (shown only for M.smegmatis). Overexpression also increases the number of gentamicin-tolerant and levofloxacin-tolerant persister cells. In terms of biological role, in combination with cognate antitoxin RelF represses its own promoter. Has been seen to bind DNA in complex with antitoxin RelF but not alone. This is Toxin RelG (relG) from Mycobacterium tuberculosis (strain ATCC 25618 / H37Rv).